Consider the following 360-residue polypeptide: MKASLLNKLDTLQDRFEELTALLGDAEVISDQARFRAYSREYSEVEPVIGAYKEWRKVQDDLEGAQALLKDADPDMREMAVEEVREAKEQLVGLESQLQRMLLPKDPNDGRNVFLEIRAGTGGDEAAIFSGDLFRMYSRYAERRGWRLEILSENEGEHGGYKEIIARVEGDSVYGKLKFESGAHRVQRVPETESQGRIHTSACTVAVLPEPDEQVAIEINPADLRVDTYRASGAGGQHVNKTDSAIRITHLPTGIVVECQEERSQHKNRARAMSWLSAKLNDMQTSAAQNAIASERKLLVGSGDRSERIRTYNYPQGRVTDHRINLTLYSLDDILAGGVDAVIEPLLAEYQADQLAALGD.

Position 237 is an N5-methylglutamine (Gln237).

Belongs to the prokaryotic/mitochondrial release factor family. Methylated by PrmC. Methylation increases the termination efficiency of RF1.

It localises to the cytoplasm. Peptide chain release factor 1 directs the termination of translation in response to the peptide chain termination codons UAG and UAA. The polypeptide is Peptide chain release factor 1 (Pseudomonas putida (strain W619)).